Consider the following 301-residue polypeptide: POU domain, class 6, transcription factor 1 (301 aa).

A run of 2 repeats spans residues 11–17 and 50–56. Residues 11 to 56 form a 2 X 7 AA repeats of N-A-Q-G-Q-V-I region; the sequence is NAQGQVIGALPWVVNSASVATPAPAQSLQVQAVTPQLLLNAQGQVI. Residues 66–88 are disordered; sequence QPVAVRKPSTPESPAKSEVQPIQ. The 75-residue stretch at 139–213 folds into the POU-specific domain; it reads EDGINLEEIR…VLEKWLNEAE (75 aa). The segment at residues 234 to 293 is a DNA-binding region (homeobox); the sequence is KRKRRTSFTPQAIEALNAYFEKNPLPTGQEITEIAKELNYDREVVRVWFCNRRQTLKNTS.

It belongs to the POU transcription factor family. Class-6 subfamily. In the embryo, widely expressed, with highest levels in the developing brain and spinal cord. In the adult, mostly found in the brain, where it is diffusely expressed with the exception of an enrichment in layer IV of the neocortex. Also found in kidney, lung, heart, adrenal, skin, and placenta. Low levels in spleen, muscle, liver, anterior pituitary, testis and ovary.

The protein resides in the nucleus. Transcription factor that binds preferentially to a variant of the octamer motif (5'-ATGATAAT-3'). The sequence is that of POU domain, class 6, transcription factor 1 (Pou6f1) from Rattus norvegicus (Rat).